A 458-amino-acid chain; its full sequence is MKEYKTISEIAGPLLFVRKTEPVGYQELVNIVLSDGTVKRGQVLDSSNDVVAVQVFEGTSGISRDSSVKFLGETIKMPVSKDMLGRILSGSGEPLDGGPAIIPEKRLEIVGAAINPYSRRQPKDFIQTGISTIDGMNTLVRGQKLPIFSGSGLPHNEIALQIARQAKVVGSTEPFAVVFCAMGITAEEAQTFMKDFERTGALERAVVFLNLADDPAIERIITPRLALTTAEYLAFEHDMHVLVIYTDMTNYCEALRQIGAAREEVPGRRGYPGYMYTDLAQLYERAGIIEGKKGSITQVPILTMPGDDITHPIPDLTGYITEGQIVVARDLHRKNIYPPINVSPSLSRLMSLGIGAGKTREDHKAVSDQCYSAYAEGKDLRGLVAIVGKDALSERDRQFLEFADAFEDKFVRQGREEDRSIEQTLDLAWELLSMLPINALNKIDNKYIEKYHPSKRKK.

The protein belongs to the ATPase alpha/beta chains family. As to quaternary structure, has multiple subunits with at least A(3), B(3), C, D, E, F, H, I and proteolipid K(x).

It localises to the cell membrane. Its function is as follows. Component of the A-type ATP synthase that produces ATP from ADP in the presence of a proton gradient across the membrane. The B chain is a regulatory subunit. This chain is A-type ATP synthase subunit B, found in Methanocella arvoryzae (strain DSM 22066 / NBRC 105507 / MRE50).